We begin with the raw amino-acid sequence, 213 residues long: Uracil phosphoribosyltransferase (213 aa).

5-phospho-alpha-D-ribose 1-diphosphate contacts are provided by residues arginine 77, arginine 102, and aspartate 129 to serine 137. Uracil-binding positions include isoleucine 198 and glycine 203 to alanine 205. Aspartate 204 contributes to the 5-phospho-alpha-D-ribose 1-diphosphate binding site.

Belongs to the UPRTase family. Mg(2+) serves as cofactor.

The enzyme catalyses UMP + diphosphate = 5-phospho-alpha-D-ribose 1-diphosphate + uracil. It participates in pyrimidine metabolism; UMP biosynthesis via salvage pathway; UMP from uracil: step 1/1. With respect to regulation, allosterically activated by GTP. Functionally, catalyzes the conversion of uracil and 5-phospho-alpha-D-ribose 1-diphosphate (PRPP) to UMP and diphosphate. In Mycobacteroides abscessus (strain ATCC 19977 / DSM 44196 / CCUG 20993 / CIP 104536 / JCM 13569 / NCTC 13031 / TMC 1543 / L948) (Mycobacterium abscessus), this protein is Uracil phosphoribosyltransferase.